A 342-amino-acid polypeptide reads, in one-letter code: tRNA N6-adenosine threonylcarbamoyltransferase (342 aa).

The Fe cation site is built by histidine 114 and histidine 118. Substrate-binding positions include 136–140 (LVSGG), aspartate 169, glycine 182, aspartate 186, and asparagine 275. Aspartate 301 is a binding site for Fe cation.

Belongs to the KAE1 / TsaD family. It depends on Fe(2+) as a cofactor.

It is found in the cytoplasm. It catalyses the reaction L-threonylcarbamoyladenylate + adenosine(37) in tRNA = N(6)-L-threonylcarbamoyladenosine(37) in tRNA + AMP + H(+). Its function is as follows. Required for the formation of a threonylcarbamoyl group on adenosine at position 37 (t(6)A37) in tRNAs that read codons beginning with adenine. Is involved in the transfer of the threonylcarbamoyl moiety of threonylcarbamoyl-AMP (TC-AMP) to the N6 group of A37, together with TsaE and TsaB. TsaD likely plays a direct catalytic role in this reaction. This Streptococcus pyogenes serotype M4 (strain MGAS10750) protein is tRNA N6-adenosine threonylcarbamoyltransferase.